A 149-amino-acid polypeptide reads, in one-letter code: L-alanine exporter AlaE (149 aa).

4 consecutive transmembrane segments (helical) span residues 16-36 (FAMV…LSGM), 46-66 (LVAI…RDLI), 85-105 (VLAY…TVGA), and 112-132 (AAVS…GYFL).

It belongs to the AlaE exporter family.

The protein localises to the cell inner membrane. In terms of biological role, exports L-alanine. The chain is L-alanine exporter AlaE from Salmonella arizonae (strain ATCC BAA-731 / CDC346-86 / RSK2980).